A 333-amino-acid polypeptide reads, in one-letter code: Coiled-coil domain-containing protein 68 (333 aa).

2 coiled-coil regions span residues 86 to 120 (LDLL…SREA) and 160 to 302 (EKEQ…HWTE).

As to quaternary structure, interacts with CEP170.

The protein localises to the cytoplasm. It is found in the cytoskeleton. Its subcellular location is the microtubule organizing center. The protein resides in the centrosome. It localises to the centriole. Centriolar protein required for centriole subdistal appendage assembly and microtubule anchoring in interphase cells. Together with CCDC120, cooperate with subdistal appendage components ODF2, NIN and CEP170 for hierarchical subdistal appendage assembly. In Mus musculus (Mouse), this protein is Coiled-coil domain-containing protein 68 (Ccdc68).